The primary structure comprises 176 residues: ATP-dependent protease subunit HslV (176 aa).

The active site involves T2. 3 residues coordinate Na(+): G157, C160, and T163.

Belongs to the peptidase T1B family. HslV subfamily. In terms of assembly, a double ring-shaped homohexamer of HslV is capped on each side by a ring-shaped HslU homohexamer. The assembly of the HslU/HslV complex is dependent on binding of ATP.

The protein resides in the cytoplasm. The enzyme catalyses ATP-dependent cleavage of peptide bonds with broad specificity.. Its activity is regulated as follows. Allosterically activated by HslU binding. Functionally, protease subunit of a proteasome-like degradation complex believed to be a general protein degrading machinery. The polypeptide is ATP-dependent protease subunit HslV (Photorhabdus laumondii subsp. laumondii (strain DSM 15139 / CIP 105565 / TT01) (Photorhabdus luminescens subsp. laumondii)).